A 39-amino-acid polypeptide reads, in one-letter code: Photosystem I reaction center subunit IX (39 aa).

The helical transmembrane segment at 7 to 27 threads the bilayer; it reads FLTTAPVAFILFSSFVFALFI.

The protein belongs to the PsaJ family.

Its subcellular location is the cellular thylakoid membrane. In terms of biological role, may help in the organization of the PsaE and PsaF subunits. In Synechococcus sp. (strain JA-3-3Ab) (Cyanobacteria bacterium Yellowstone A-Prime), this protein is Photosystem I reaction center subunit IX.